The chain runs to 357 residues: Probable GTP 3',8-cyclase (357 aa).

One can recognise a Radical SAM core domain in the interval 5–234; sequence DFGRDVSGVR…DRRRYWVSSR (230 aa). GTP is bound at residue Arg-14. Positions 21 and 25 each coordinate [4Fe-4S] cluster. Tyr-27 contributes to the S-adenosyl-L-methionine binding site. Cys-28 is a [4Fe-4S] cluster binding site. Lys-68 contacts GTP. Gly-72 is an S-adenosyl-L-methionine binding site. Thr-96 lines the GTP pocket. Ser-120 lines the S-adenosyl-L-methionine pocket. Residue Lys-157 coordinates GTP. The segment at 232–256 is disordered; sequence SSRDAGSTADDAAQSVTPDGGAHPD. [4Fe-4S] cluster-binding residues include Cys-272 and Cys-275. 277–279 is a binding site for GTP; sequence RVR. Cys-289 serves as a coordination point for [4Fe-4S] cluster.

The protein belongs to the radical SAM superfamily. MoaA family. Requires [4Fe-4S] cluster as cofactor.

It carries out the reaction GTP + AH2 + S-adenosyl-L-methionine = (8S)-3',8-cyclo-7,8-dihydroguanosine 5'-triphosphate + 5'-deoxyadenosine + L-methionine + A + H(+). It functions in the pathway cofactor biosynthesis; molybdopterin biosynthesis. Functionally, catalyzes the cyclization of GTP to (8S)-3',8-cyclo-7,8-dihydroguanosine 5'-triphosphate. The polypeptide is Probable GTP 3',8-cyclase (Halobacterium salinarum (strain ATCC 29341 / DSM 671 / R1)).